Here is a 171-residue protein sequence, read N- to C-terminus: Putative charged multivesicular body protein 4B-like protein CHMP4BP1 (171 aa).

Residues 1–17 (MLSKKQEFLEKKIEQRH) are compositionally biased toward basic and acidic residues. 2 disordered regions span residues 1–24 (MLSK…NKPA) and 132–171 (EQEE…KTTT).

Belongs to the SNF7 family.

The chain is Putative charged multivesicular body protein 4B-like protein CHMP4BP1 (CHMP4BP1) from Homo sapiens (Human).